The primary structure comprises 366 residues: Aminomethyltransferase (366 aa).

The protein belongs to the GcvT family. As to quaternary structure, the glycine cleavage system is composed of four proteins: P, T, L and H.

It carries out the reaction N(6)-[(R)-S(8)-aminomethyldihydrolipoyl]-L-lysyl-[protein] + (6S)-5,6,7,8-tetrahydrofolate = N(6)-[(R)-dihydrolipoyl]-L-lysyl-[protein] + (6R)-5,10-methylene-5,6,7,8-tetrahydrofolate + NH4(+). In terms of biological role, the glycine cleavage system catalyzes the degradation of glycine. This chain is Aminomethyltransferase, found in Bacillus velezensis (strain DSM 23117 / BGSC 10A6 / LMG 26770 / FZB42) (Bacillus amyloliquefaciens subsp. plantarum).